The chain runs to 61 residues: MTQAKTFKVTLVKSLIGRKENHIASARGLGLRKINHTVEVLDTPENRGMANKIYYMVKIEG.

Belongs to the universal ribosomal protein uL30 family. In terms of assembly, part of the 50S ribosomal subunit.

The protein is Large ribosomal subunit protein uL30 of Francisella tularensis subsp. tularensis (strain FSC 198).